A 557-amino-acid polypeptide reads, in one-letter code: Urocanate hydratase (557 aa).

The interval 1–20 (MSNPRHNEREVRSPRGDELN) is disordered. Residues 52-53 (GG), Q130, 176-178 (GMG), E196, R201, 242-243 (NA), 263-267 (QTSAH), 273-274 (YL), and Y322 contribute to the NAD(+) site. The active site involves C410. G492 is an NAD(+) binding site.

The protein belongs to the urocanase family. NAD(+) is required as a cofactor.

The protein resides in the cytoplasm. The enzyme catalyses 4-imidazolone-5-propanoate = trans-urocanate + H2O. It participates in amino-acid degradation; L-histidine degradation into L-glutamate; N-formimidoyl-L-glutamate from L-histidine: step 2/3. Its function is as follows. Catalyzes the conversion of urocanate to 4-imidazolone-5-propionate. The chain is Urocanate hydratase from Brucella suis (strain ATCC 23445 / NCTC 10510).